A 251-amino-acid polypeptide reads, in one-letter code: CCN family member 5 (251 aa).

Residues Met-1–Ser-23 form the signal peptide. An IGFBP N-terminal domain is found at Gln-24–Asn-103. Disulfide bonds link Cys-26-Cys-50, Cys-30-Cys-52, Cys-32-Cys-53, Cys-39-Cys-56, Cys-64-Cys-78, and Cys-70-Cys-100. Positions Gly-98–Asp-164 constitute a VWFC domain. A TSP type-1 domain is found at Cys-195–Leu-239. N-linked (GlcNAc...) asparagine glycosylation is present at Asn-197.

It belongs to the CCN family.

Its subcellular location is the secreted. Its function is as follows. May play an important role in modulating bone turnover. Promotes the adhesion of osteoblast cells and inhibits the binding of fibrinogen to integrin receptors. In addition, inhibits osteocalcin production. This Mus musculus (Mouse) protein is CCN family member 5 (Ccn5).